The chain runs to 268 residues: Phosphatidylglycerol--prolipoprotein diacylglyceryl transferase (268 aa).

The next 4 membrane-spanning stretches (helical) occupy residues 14-34 (LGPI…FAGW), 57-77 (LTFY…IIFY), 90-110 (FFLW…LIAF), and 117-137 (IGAN…IGLG). R140 contacts a 1,2-diacyl-sn-glycero-3-phospho-(1'-sn-glycerol). Helical transmembrane passes span 174 to 194 (QLFE…LVTI), 200 to 220 (YLVL…CEFF), and 238 to 258 (GQIL…AVFI).

It belongs to the Lgt family.

Its subcellular location is the cell inner membrane. It catalyses the reaction L-cysteinyl-[prolipoprotein] + a 1,2-diacyl-sn-glycero-3-phospho-(1'-sn-glycerol) = an S-1,2-diacyl-sn-glyceryl-L-cysteinyl-[prolipoprotein] + sn-glycerol 1-phosphate + H(+). It functions in the pathway protein modification; lipoprotein biosynthesis (diacylglyceryl transfer). Catalyzes the transfer of the diacylglyceryl group from phosphatidylglycerol to the sulfhydryl group of the N-terminal cysteine of a prolipoprotein, the first step in the formation of mature lipoproteins. This Francisella tularensis subsp. holarctica (strain FTNF002-00 / FTA) protein is Phosphatidylglycerol--prolipoprotein diacylglyceryl transferase.